The chain runs to 62 residues: uncharacterized protein (62 aa).

The protein resides in the mitochondrion. This is an uncharacterized protein from Marchantia polymorpha (Common liverwort).